The sequence spans 728 residues: 1,4-alpha-glucan branching enzyme GlgB (728 aa).

The active-site Nucleophile is Asp405. Catalysis depends on Glu458, which acts as the Proton donor.

The protein belongs to the glycosyl hydrolase 13 family. GlgB subfamily. Monomer.

It catalyses the reaction Transfers a segment of a (1-&gt;4)-alpha-D-glucan chain to a primary hydroxy group in a similar glucan chain.. It participates in glycan biosynthesis; glycogen biosynthesis. Catalyzes the formation of the alpha-1,6-glucosidic linkages in glycogen by scission of a 1,4-alpha-linked oligosaccharide from growing alpha-1,4-glucan chains and the subsequent attachment of the oligosaccharide to the alpha-1,6 position. The protein is 1,4-alpha-glucan branching enzyme GlgB of Escherichia coli O139:H28 (strain E24377A / ETEC).